The following is a 450-amino-acid chain: MLVTAYLAFVGLLASCLGLELSRCRAKPPGRACSNPSFLRSQLDFYQVYFLALAADWLQAPYLYKLYQHYYFLEGQIAILYVCGLASTVLFGLVASSLVDWLGRKNSCVLFSLTYSLCCLTKLSQDYFVLLVGRALGGLSTALLFSAFEAWYIHEHVERHDFPTEWIPATFARAAFWNHVLAVVAGVAAEAVASWIGLGPVAPFVAAIPLLALAGALALRNWGENYDRQRAFSRTCAGGLRCLLSDRRVLLLGTIQALFESVIFIFVFLWTPVLDPHGAPLGIVFSSFMAASLLGSSLYRIATSKRYHLQPMHLLSLAVLIVVFSLFMLTFSTSPGQESPVESFIAFLLIELACGLYFPSMSFLRRKVIPETEQAGVLNWFRVPLHLLACLGLLVLHDSDRKTGTRNMFSICSAVMVMALLAVVGLFTVVRHDAELRVPSPTEEPYAPEL.

12 consecutive transmembrane segments (helical) span residues 1 to 21 (MLVTAYLAFVGLLASCLGLEL), 43 to 63 (LDFYQVYFLALAADWLQAPYL), 79 to 99 (ILYVCGLASTVLFGLVASSLV), 128 to 148 (FVLLVGRALGGLSTALLFSAF), 174 to 194 (AAFWNHVLAVVAGVAAEAVAS), 195 to 215 (WIGLGPVAPFVAAIPLLALAG), 249 to 269 (VLLLGTIQALFESVIFIFVFL), 278 to 298 (GAPLGIVFSSFMAASLLGSSL), 311 to 331 (PMHLLSLAVLIVVFSLFMLTF), 344 to 364 (FIAFLLIELACGLYFPSMSFL), 376 to 396 (GVLNWFRVPLHLLACLGLLVL), and 409 to 429 (FSICSAVMVMALLAVVGLFTV).

Belongs to the major facilitator superfamily.

It is found in the cell membrane. In terms of biological role, mediates high-affinity intracellular uptake of the rare oligo-element molybdenum. The sequence is that of Molybdate-anion transporter (MFSD5) from Pongo abelii (Sumatran orangutan).